A 317-amino-acid polypeptide reads, in one-letter code: MQKDKFGPCAPSRIPLLSNDLISMLSGGVAATVSRTAVSPLERMKIIFQVQNNKEYTSLTSTLVKIWNREGLIGFFRGNGTNCLRAFPYGAVQFATFNMLKQRALKNRSHQNLENHERLLFGAIAGAASCATTYPLDIARTRLSIETAGLTSRSLAINNVANNSLKVKPLTLWSTLLYIVQHEGGYPALYNGLPATLLNVVPYVSICFFTFEFCKQKFFSNADLTAFQKLFLGGFTGIIGQTLTFPADVLRRRFQVNRIPGIGHNYKNIKSAIFHIYKTEGINGFFRGYSSNMLKIIPVMSITWYTYETVSKMLHDL.

A run of 6 helical transmembrane segments spans residues 14–34 (IPLL…ATVS), 72–92 (LIGF…YGAV), 119–139 (LLFG…LDIA), 196–216 (TLLN…FCKQ), 230–250 (LFLG…ADVL), and 291–307 (SNML…WYTY). Solcar repeat units follow at residues 18 to 103 (SNDL…LKQR), 113 to 217 (LENH…CKQK), and 224 to 313 (LTAF…VSKM).

This sequence belongs to the mitochondrial carrier (TC 2.A.29) family.

It is found in the mitochondrion inner membrane. This is an uncharacterized protein from Schizosaccharomyces pombe (strain 972 / ATCC 24843) (Fission yeast).